The sequence spans 215 residues: ATP-dependent Clp protease proteolytic subunit 3 (215 aa).

The active-site Nucleophile is Ser119. The active site involves His144.

It belongs to the peptidase S14 family. As to quaternary structure, fourteen ClpP subunits assemble into 2 heptameric rings which stack back to back to give a disk-like structure with a central cavity, resembling the structure of eukaryotic proteasomes.

Its subcellular location is the cytoplasm. It carries out the reaction Hydrolysis of proteins to small peptides in the presence of ATP and magnesium. alpha-casein is the usual test substrate. In the absence of ATP, only oligopeptides shorter than five residues are hydrolyzed (such as succinyl-Leu-Tyr-|-NHMec, and Leu-Tyr-Leu-|-Tyr-Trp, in which cleavage of the -Tyr-|-Leu- and -Tyr-|-Trp bonds also occurs).. Functionally, cleaves peptides in various proteins in a process that requires ATP hydrolysis. Has a chymotrypsin-like activity. Plays a major role in the degradation of misfolded proteins. In Prochlorococcus marinus subsp. pastoris (strain CCMP1986 / NIES-2087 / MED4), this protein is ATP-dependent Clp protease proteolytic subunit 3.